Consider the following 193-residue polypeptide: p53 apoptosis effector related to PMP-22 (193 aa).

The next 4 helical transmembrane spans lie at Arg12–Gly32, Ala79–Leu99, Val110–Pro130, and Trp151–Cys171.

The protein belongs to the TMEM47 family. In terms of assembly, (Microbial infection) Interacts with S.typhimurium sipA and sctB1/sipC. As to expression, expressed in skin, heart, placental, liver, pancreas, keratinocytes and dermal fibroblasts. May translocate to the intestinal apical epithelial cell surface via sipA and sctB1/sipC-promoted exocytic translocation following infection by S. Typhimurium.

The protein localises to the cell junction. It is found in the desmosome. The protein resides in the cell membrane. It localises to the cytoplasm. Component of intercellular desmosome junctions. Plays a role in stratified epithelial integrity and cell-cell adhesion by promoting desmosome assembly. Thereby plays a role in barrier function of the skin against infection. Plays a role in mammary epithelial tissue homeostasis and remodeling during and after pregnancy, potentially via its involvement in desmosome cell-cell junctions. Required for tooth enamel development via facilitating desmosome-mediated ameloblast adhesion to the stratum intermedium during the transitional stage of amelogenesis. May also play a role in downstream transcriptional regulation of other genes involved in amelogenesis such as AMBN, ENAM, MMP20 and KLK4. Plays a role as an effector in the TP53-dependent apoptotic pathway. Positively regulates apoptosis in T-helper 17 (Th17) cell populations via caspase-dependent signaling. Promotes neutrophil transepithelial migration in response to chemoattractants such as hepoxilin A3 (HXA3), N-Formylmethionyl-leucyl-phenylalanine (fMLP) and CXCL8/IL-8. Required for neutrophil transepithelial migration in response to S.typhimurium infection. May act as a positive regulator of endothelial cell apoptosis in response to blood flow-derived shear stress. The polypeptide is p53 apoptosis effector related to PMP-22 (Homo sapiens (Human)).